We begin with the raw amino-acid sequence, 297 residues long: 33 kDa chaperonin (297 aa).

2 disulfides stabilise this stretch: cysteine 234–cysteine 236 and cysteine 267–cysteine 270.

Belongs to the HSP33 family. Post-translationally, under oxidizing conditions two disulfide bonds are formed involving the reactive cysteines. Under reducing conditions zinc is bound to the reactive cysteines and the protein is inactive.

The protein localises to the cytoplasm. Redox regulated molecular chaperone. Protects both thermally unfolding and oxidatively damaged proteins from irreversible aggregation. Plays an important role in the bacterial defense system toward oxidative stress. In Pseudoalteromonas atlantica (strain T6c / ATCC BAA-1087), this protein is 33 kDa chaperonin.